The primary structure comprises 451 residues: MREVISIHIGQAGIQVGNACWELYCLEHGIQPDGQMPSDKTIGGGDDAFNTFFSETGAGKHVPRCIFLDLEPTVVDEVRTGTYRQLFHPEQLISGKEDAANNFARGHYTIGKEIVDLALDRIRKLADNCTGLQGFLVFNAVGGGTGSGLGSLLLERLSVDYGKKSKLGFTVYPSPQVSTAVVEPYNSVLSTHSLLEHTDVAVMLDNEAIYDICRRSLDIERPTYTNLNRLIAQVISSLTASLRFDGALNVDITEFQTNLVPYPRIHFMLSSYAPIISAEKAYHEQLSVAEITNAAFEPASMMVKCDPRHGKYMACCLMYRGDVVPKDVNASVATIKTKRTIQFVDWCPTGFKCGINYQPPTVVPGGDLAKVQRAVCMISNSTAIGEIFSRLDHKFDLMYAKRAFVHWYVGEGMEEGEFSEAREDLAALEKDFEEVGAESAEGAGEGEGEEY.

Gln11 serves as a coordination point for GTP. An N6-acetyllysine modification is found at Lys40. The GTP site is built by Glu71, Gly144, Thr145, Thr179, Asn206, and Asn228. Glu71 contacts Mg(2+). Glu254 is an active-site residue.

Belongs to the tubulin family. Dimer of alpha and beta chains. A typical microtubule is a hollow water-filled tube with an outer diameter of 25 nm and an inner diameter of 15 nM. Alpha-beta heterodimers associate head-to-tail to form protofilaments running lengthwise along the microtubule wall with the beta-tubulin subunit facing the microtubule plus end conferring a structural polarity. Microtubules usually have 13 protofilaments but different protofilament numbers can be found in some organisms and specialized cells. Requires Mg(2+) as cofactor. In terms of processing, undergoes a tyrosination/detyrosination cycle, the cyclic removal and re-addition of a C-terminal tyrosine residue by the enzymes tubulin tyrosine carboxypeptidase (TTCP) and tubulin tyrosine ligase (TTL), respectively. Post-translationally, acetylation of alpha chains at Lys-40 stabilizes microtubules and affects affinity and processivity of microtubule motors. This modification has a role in multiple cellular functions, ranging from cell motility, cell cycle progression or cell differentiation to intracellular trafficking and signaling.

It localises to the cytoplasm. It is found in the cytoskeleton. The catalysed reaction is GTP + H2O = GDP + phosphate + H(+). Functionally, tubulin is the major constituent of microtubules, a cylinder consisting of laterally associated linear protofilaments composed of alpha- and beta-tubulin heterodimers. Microtubules grow by the addition of GTP-tubulin dimers to the microtubule end, where a stabilizing cap forms. Below the cap, tubulin dimers are in GDP-bound state, owing to GTPase activity of alpha-tubulin. This Chlamydomonas reinhardtii (Chlamydomonas smithii) protein is Tubulin alpha-1 chain (TUBA1).